The sequence spans 306 residues: tRNA-cytidine(32) 2-sulfurtransferase (306 aa).

Residues 49 to 54 carry the PP-loop motif motif; that stretch reads SGGKDS. Residues Cys124, Cys127, and Cys215 each contribute to the [4Fe-4S] cluster site.

The protein belongs to the TtcA family. Homodimer. It depends on Mg(2+) as a cofactor. [4Fe-4S] cluster serves as cofactor.

It is found in the cytoplasm. The catalysed reaction is cytidine(32) in tRNA + S-sulfanyl-L-cysteinyl-[cysteine desulfurase] + AH2 + ATP = 2-thiocytidine(32) in tRNA + L-cysteinyl-[cysteine desulfurase] + A + AMP + diphosphate + H(+). Its pathway is tRNA modification. Its function is as follows. Catalyzes the ATP-dependent 2-thiolation of cytidine in position 32 of tRNA, to form 2-thiocytidine (s(2)C32). The sulfur atoms are provided by the cysteine/cysteine desulfurase (IscS) system. The protein is tRNA-cytidine(32) 2-sulfurtransferase of Azoarcus sp. (strain BH72).